The primary structure comprises 390 residues: Zinc finger protein 121 (390 aa).

The C2H2-type 1; degenerate zinc-finger motif lies at 88-110; the sequence is FEYSDCEEAFVDQSHLQANRITH. A C2H2-type 2; degenerate zinc finger spans residues 116 to 138; that stretch reads YEQKQCGRAFTYSTSHAVSVKMH. 9 consecutive C2H2-type zinc fingers follow at residues 144 to 166, 172 to 194, 200 to 222, 228 to 250, 256 to 278, 284 to 306, 312 to 334, 340 to 362, and 368 to 390; these read YECK…MRTH, YECK…VRIH, YQCK…VRIH, YECN…FKTH, FECK…FRIH, YKCK…VKIH, YECK…IRTH, YICK…VRIH, and YICN…LKTH.

Belongs to the krueppel C2H2-type zinc-finger protein family.

Its subcellular location is the nucleus. In terms of biological role, may be involved in transcriptional regulation. This Homo sapiens (Human) protein is Zinc finger protein 121 (ZNF121).